The primary structure comprises 244 residues: Agamous-like MADS-box protein MADS2 (244 aa).

The MADS-box domain occupies Met1–Ser61. In terms of domain architecture, K-box spans Glu88 to Lys178.

As to expression, expressed in flowers and seeds.

The protein localises to the nucleus. In terms of biological role, probable transcription factor involved in flower development. In Vitis vinifera (Grape), this protein is Agamous-like MADS-box protein MADS2.